Reading from the N-terminus, the 229-residue chain is uncharacterized protein (229 aa).

ATP is bound at residue Gly-22–Thr-29.

This is an uncharacterized protein from Mycoplasma pneumoniae (strain ATCC 29342 / M129 / Subtype 1) (Mycoplasmoides pneumoniae).